A 103-amino-acid polypeptide reads, in one-letter code: 4-amino-4-deoxychorismate mutase (103 aa).

The region spanning 1–92 (MTEQNELQRL…EMCRVEDLVM (92 aa)) is the Chorismate mutase domain.

It carries out the reaction 4-amino-4-deoxychorismate = 4-amino-4-deoxyprephenate. The protein operates within antibiotic biosynthesis. Functionally, involved in chloramphenicol biosynthesis. Probably catalyzes the conversion of 4-amino-4-deoxychorismate to 4-amino-4-deoxyprephenate. This is 4-amino-4-deoxychorismate mutase from Streptomyces venezuelae (strain ATCC 10712 / CBS 650.69 / DSM 40230 / JCM 4526 / NBRC 13096 / PD 04745).